The sequence spans 189 residues: Large ribosomal subunit protein bL17 (189 aa).

Residues 126 to 189 (DRARRVKASQ…DADADEAPQN (64 aa)) are disordered. Residues 139 to 180 (QDAPSEPQAAEEPAAEEAVAATEAVAAPADAEATDAEAGSAD) are compositionally biased toward low complexity.

This sequence belongs to the bacterial ribosomal protein bL17 family. Part of the 50S ribosomal subunit. Contacts protein L32.

The protein is Large ribosomal subunit protein bL17 of Mycobacterium marinum (strain ATCC BAA-535 / M).